The primary structure comprises 269 residues: MEFWGAEVKSGEPLTVQPGDGMVLHLSQASLGELKKDKSESVCLSVNIDGKKLVLGTLNSEKVPQQQFDLVFDRDFELSHNLKSGSVYFFGYKATNPFEEEEDDEDDYDESDEDIPLTLANSGKPEPKEAGKSNAGKDSASGKQKVRIVEPTKDDEDESSDDDDSDMGEDEDDSDDSEEETPKKAEPAKRRKADSATKTPVTDKKAKLTTPQKTDGKKGGGHVATPHPSKQASKTPKSAGSHHCKPCNRSFGSEGALDSHSKAKHSAGK.

The segment at 97-269 (PFEEEEDDED…HSKAKHSAGK (173 aa)) is disordered. Acidic residues-rich tracts occupy residues 98 to 115 (FEEE…DEDI) and 153 to 179 (KDDE…DSEE). A compositionally biased stretch (polar residues) spans 228-238 (PSKQASKTPKS). The C2H2-type zinc-finger motif lies at 242-265 (HHCKPCNRSFGSEGALDSHSKAKH).

Belongs to the histone deacetylase HD2 family. As to expression, predominantly expressed in ovaries. Accumulates predominantly in the micropylar region of the ovule's integument.

The protein localises to the nucleus. Its subcellular location is the nucleolus. In terms of biological role, mediates the deacetylation of lysine residues on the N-terminal part of the core histones (H2A, H2B, H3 and H4). Histone deacetylation gives a tag for epigenetic repression and plays an important role in transcriptional regulation, cell cycle progression and developmental events. This chain is Histone deacetylase HDT1 (HDT1), found in Solanum chacoense (Chaco potato).